The sequence spans 130 residues: Small ribosomal subunit protein uS9 (130 aa).

It belongs to the universal ribosomal protein uS9 family.

This Haemophilus influenzae (strain 86-028NP) protein is Small ribosomal subunit protein uS9.